Reading from the N-terminus, the 178-residue chain is CDP-archaeol synthase (178 aa).

The next 5 helical transmembrane spans lie at 7–27 (LFVS…ACIF), 56–76 (FFGV…SNLG), 91–111 (VIIG…GSFL), 125–145 (VLDQ…YYLV), and 149–169 (ISIT…IIAY).

Belongs to the CDP-archaeol synthase family. Mg(2+) is required as a cofactor.

Its subcellular location is the cell membrane. The enzyme catalyses 2,3-bis-O-(geranylgeranyl)-sn-glycerol 1-phosphate + CTP + H(+) = CDP-2,3-bis-O-(geranylgeranyl)-sn-glycerol + diphosphate. It participates in membrane lipid metabolism; glycerophospholipid metabolism. Its function is as follows. Catalyzes the formation of CDP-2,3-bis-(O-geranylgeranyl)-sn-glycerol (CDP-archaeol) from 2,3-bis-(O-geranylgeranyl)-sn-glycerol 1-phosphate (DGGGP) and CTP. This reaction is the third ether-bond-formation step in the biosynthesis of archaeal membrane lipids. In Methanococcus vannielii (strain ATCC 35089 / DSM 1224 / JCM 13029 / OCM 148 / SB), this protein is CDP-archaeol synthase.